We begin with the raw amino-acid sequence, 627 residues long: Chaperone protein DnaK (627 aa).

Position 197 is a phosphothreonine; by autocatalysis (T197). The span at 598–611 shows a compositional bias: low complexity; that stretch reads AYAKEQGGQQGAAD. A disordered region spans residues 598 to 627; it reads AYAKEQGGQQGAADAGKKADDDDVIDAEVE. Residues 618 to 627 show a composition bias toward acidic residues; sequence DDDVIDAEVE.

The protein belongs to the heat shock protein 70 family.

Acts as a chaperone. The sequence is that of Chaperone protein DnaK from Sulfurovum sp. (strain NBC37-1).